We begin with the raw amino-acid sequence, 162 residues long: uncharacterized protein (162 aa).

This is an uncharacterized protein from Methanocaldococcus jannaschii (strain ATCC 43067 / DSM 2661 / JAL-1 / JCM 10045 / NBRC 100440) (Methanococcus jannaschii).